The chain runs to 220 residues: Lipoprotein-releasing system ATP-binding protein LolD (220 aa).

In terms of domain architecture, ABC transporter spans 1–220; that stretch reads MRAVDIHKSY…YRMKDGQWQS (220 aa). 37 to 44 contacts ATP; that stretch reads GASGAGKS.

It belongs to the ABC transporter superfamily. Lipoprotein translocase (TC 3.A.1.125) family. In terms of assembly, the complex is composed of two ATP-binding proteins (LolD) and two transmembrane proteins (LolC and LolE).

The protein resides in the cell inner membrane. Part of the ABC transporter complex LolCDE involved in the translocation of mature outer membrane-directed lipoproteins, from the inner membrane to the periplasmic chaperone, LolA. Responsible for the formation of the LolA-lipoprotein complex in an ATP-dependent manner. This chain is Lipoprotein-releasing system ATP-binding protein LolD, found in Bdellovibrio bacteriovorus (strain ATCC 15356 / DSM 50701 / NCIMB 9529 / HD100).